Reading from the N-terminus, the 422-residue chain is Vitamin D3 receptor (422 aa).

The segment at residues 21–96 (PRICGVCGDR…IGMMKEFILT (76 aa)) is a DNA-binding region (nuclear receptor). The Zn(2+) site is built by Cys24, Cys27, Cys41, Cys44, Cys60, Cys66, Cys76, and Cys79. 2 NR C4-type zinc fingers span residues 24–44 (CGVC…CEGC) and 60–84 (CPFN…LKRC). Residues 97–126 (DEEVQRKREMIMKRKEEEALKDSLRPKLSE) are hinge. Residues 127–418 (EQQHIIAILL…LTPLVLEVFG (292 aa)) form the NR LBD domain. Tyr143 contributes to the calcitriol binding site. Residues 161 to 185 (VSTGSYSPRPTLSFSGDSSSNSDLY) are disordered. Over residues 162–172 (STGSYSPRPTL) the composition is skewed to polar residues. Positions 173 to 182 (SFSGDSSSNS) are enriched in low complexity. Ser232 serves as a coordination point for calcitriol. The tract at residues 241–259 (KMIPGFRDLTSDDQIVLLK) is interaction with coactivator LXXLL motif. Residues Arg269, Ser273, His300, and His392 each coordinate calcitriol. The short motif at 411–419 (PLVLEVFGN) is the 9aaTAD element.

It belongs to the nuclear hormone receptor family. NR1 subfamily. In terms of assembly, homodimer in the absence of bound vitamin D3. Heterodimer with RXRA after vitamin D3 binding. Interacts with MED1, NCOA1, NCOA2, NCOA3 and NCOA6 coactivators, leading to a strong increase of transcription of target genes. Interacts with the corepressor NCOR1. Interacts with SNW1. Interacts with IRX4, the interaction does not affect its transactivation activity. Interacts with CRY1. Interacts with CRY2 in a ligand-dependent manner. Post-translationally, ubiquitinated by UBR5, leading to its degradation: UBR5 specifically recognizes and binds ligand-bound VDR when it is not associated with coactivators (NCOAs). In presence of NCOAs, the UBR5-degron is not accessible, preventing its ubiquitination and degradation.

The protein localises to the nucleus. It localises to the cytoplasm. Its function is as follows. Nuclear receptor for calcitriol, the active form of vitamin D3 which mediates the action of this vitamin on cells. Enters the nucleus upon vitamin D3 binding where it forms heterodimers with the retinoid X receptor/RXR. The VDR-RXR heterodimers bind to specific response elements on DNA and activate the transcription of vitamin D3-responsive target genes. Plays a central role in calcium homeostasis. Also functions as a receptor for the secondary bile acid lithocholic acid (LCA) and its metabolites. In Mus musculus (Mouse), this protein is Vitamin D3 receptor (Vdr).